We begin with the raw amino-acid sequence, 291 residues long: Cell division protein FtsX (291 aa).

Residues 1–18 (MSSNFDKFQKRRLISSYF) lie on the Cytoplasmic side of the membrane. The chain crosses the membrane as a helical span at residues 19-39 (SVVLSVFLVLFLLGVLGLFII). Residues 40 to 162 (NSKKLADDFK…VNLVNDNIKK (123 aa)) are Periplasmic-facing. Residues 163–183 (VSMWILIISGFLTVIAVLLIN) traverse the membrane as a helical segment. Topologically, residues 184-220 (SSLRLSIHSNRFIIKTMQMVGATKSFIRKPFVMRSVK) are cytoplasmic. A helical transmembrane segment spans residues 221–241 (LGMLGALLAIIALIGLLFYVE). The Periplasmic portion of the chain corresponds to 242–253 (TNFPGLGILEDK). The helical transmembrane segment at 254 to 274 (ALIGLVLLAVFGLGVLITWVS) threads the bilayer. Residues 275-291 (THFATQRFLNLRTDDLY) lie on the Cytoplasmic side of the membrane.

It belongs to the ABC-4 integral membrane protein family. FtsX subfamily.

The protein resides in the cell inner membrane. In terms of biological role, required for cell division and gliding motility. The protein is Cell division protein FtsX of Flavobacterium johnsoniae (strain ATCC 17061 / DSM 2064 / JCM 8514 / BCRC 14874 / CCUG 350202 / NBRC 14942 / NCIMB 11054 / UW101) (Cytophaga johnsonae).